A 136-amino-acid polypeptide reads, in one-letter code: Ig kappa chain V-V region MOPC 21 (136 aa).

Positions 1-29 are cleaved as a signal peptide; it reads MHQTSMGIKMESHTLVFISILLCLYGADG. The framework-1 stretch occupies residues 30–52; the sequence is NIVMTQSPKSMSMSVGERVTLTC. The tract at residues 53-63 is complementarity-determining-1; the sequence is KASENVVTYVS. The tract at residues 64–78 is framework-2; that stretch reads WYQQKPEQSPKLLIY. Residues 79–85 are complementarity-determining-2; sequence GASNRYT. Positions 86 to 117 are framework-3; sequence GVPDRFTGSGSATDFTLTISSVQAEDLADYHC. Positions 118 to 126 are complementarity-determining-3; it reads GQGYSYPYT. The framework-4 stretch occupies residues 127–136; the sequence is FGGGTKLEIK.

This Mus musculus (Mouse) protein is Ig kappa chain V-V region MOPC 21.